A 200-amino-acid polypeptide reads, in one-letter code: Probable molybdenum cofactor guanylyltransferase (200 aa).

GTP-binding positions include 9-11 (LAG), K21, D69, and D100. D100 contacts Mg(2+).

Belongs to the MobA family. Mg(2+) is required as a cofactor.

It is found in the cytoplasm. It catalyses the reaction Mo-molybdopterin + GTP + H(+) = Mo-molybdopterin guanine dinucleotide + diphosphate. Transfers a GMP moiety from GTP to Mo-molybdopterin (Mo-MPT) cofactor (Moco or molybdenum cofactor) to form Mo-molybdopterin guanine dinucleotide (Mo-MGD) cofactor. This Bacillus cereus (strain Q1) protein is Probable molybdenum cofactor guanylyltransferase.